We begin with the raw amino-acid sequence, 217 residues long: Fucoxanthin-chlorophyll a-c binding protein B, chloroplastic (217 aa).

A chloroplast-targeting transit peptide spans 1-39 (MKSAVMAVACAAAPGFRGPSAFNGAALTTSAKACSAMKM). A run of 3 helical transmembrane segments spans residues 81-101 (IAMLAIAGHLTQQNTRLPGML), 122-142 (IPPAGLAQIFAFIGFLELAVM), and 183-203 (GRAAQMGILALMVHEELNNKP).

This sequence belongs to the fucoxanthin chlorophyll protein family. In terms of assembly, the LHC complex of chromophytic algae is composed of fucoxanthin, chlorophyll A and C bound non-covalently by fucoxanthin chlorophyll proteins (FCPs). The ratio of pigments in this LHC is; fucoxanthin: chlorophyll C: chlorophyll A; (0.6-1): (0.1-0.3): (1).

It is found in the plastid. The protein resides in the chloroplast thylakoid membrane. Functionally, the light-harvesting complex (LHC) functions as a light receptor, it captures and delivers excitation energy to photosystems with which it is closely associated. Energy is transferred from the carotenoid and chlorophyll C (or B) to chlorophyll A and the photosynthetic reaction centers where it is used to synthesize ATP and reducing power. The chain is Fucoxanthin-chlorophyll a-c binding protein B, chloroplastic (FCPB) from Macrocystis pyrifera (Giant kelp).